Reading from the N-terminus, the 393-residue chain is Phosphopentomutase (393 aa).

Residues D11, D282, H287, D323, H324, and H335 each coordinate Mn(2+).

The protein belongs to the phosphopentomutase family. Mn(2+) is required as a cofactor.

The protein resides in the cytoplasm. It catalyses the reaction 2-deoxy-alpha-D-ribose 1-phosphate = 2-deoxy-D-ribose 5-phosphate. It carries out the reaction alpha-D-ribose 1-phosphate = D-ribose 5-phosphate. It participates in carbohydrate degradation; 2-deoxy-D-ribose 1-phosphate degradation; D-glyceraldehyde 3-phosphate and acetaldehyde from 2-deoxy-alpha-D-ribose 1-phosphate: step 1/2. Functionally, isomerase that catalyzes the conversion of deoxy-ribose 1-phosphate (dRib-1-P) and ribose 1-phosphate (Rib-1-P) to deoxy-ribose 5-phosphate (dRib-5-P) and ribose 5-phosphate (Rib-5-P), respectively. This is Phosphopentomutase from Caldanaerobacter subterraneus subsp. tengcongensis (strain DSM 15242 / JCM 11007 / NBRC 100824 / MB4) (Thermoanaerobacter tengcongensis).